The chain runs to 3396 residues: Versican core protein (3396 aa).

The first 20 residues, 1-20, serve as a signal peptide directing secretion; sequence MFINIKSILWMCSTLIVTHA. Positions 21-146 constitute an Ig-like V-type domain; it reads LHKVKVGKSP…EDTQDTVSLT (126 aa). 5 disulfides stabilise this stretch: C44–C130, C172–C243, C196–C217, C270–C345, and C294–C315. N-linked (GlcNAc...) asparagine glycosylation occurs at N57. 2 consecutive Link domains span residues 150-245 and 251-347; these read VVFH…YCYV and DVFH…YCFK. An N-linked (GlcNAc...) asparagine glycan is attached at N330. A GAG-alpha (glucosaminoglycan attachment domain) region spans residues 348 to 1335; it reads PKEATTIDLS…IIEVRENKTG (988 aa). Residues 420–430 are compositionally biased toward polar residues; the sequence is ATKLPTPTGST. 2 disordered regions span residues 420–439 and 603–622; these read ATKL…MDDY and STTV…MDDW. An N-linked (GlcNAc...) asparagine glycan is attached at N615. O-linked (Xyl...) (chondroitin sulfate) serine glycosylation is present at S659. N-linked (GlcNAc...) asparagine glycans are attached at residues N782 and N809. Disordered stretches follow at residues 807 to 829, 1126 to 1154, and 1277 to 1316; these read EDNT…LPPA, IGPK…TSSL, and REYF…PAST. The span at 811 to 824 shows a compositional bias: polar residues; the sequence is TSKPLESTEPSASS. Positions 1143–1154 are enriched in low complexity; it reads EGSSTTGFTSSL. N-linked (GlcNAc...) asparagine glycans are attached at residues N1332 and N1398. The tract at residues 1336-3089 is GAG-beta; it reads RMSDLSVIGH…VEGTAIYLPG (1754 aa). 2 disordered regions span residues 1420–1497 and 1510–1539; these read VPKD…SGGE and FESG…HTEP. Residues 1422–1433 are compositionally biased toward basic and acidic residues; it reads KDPEAAEARRGQ. N-linked (GlcNAc...) asparagine glycans are attached at residues N1442 and N1468. Positions 1469–1480 are enriched in low complexity; the sequence is ESTETTESLEVT. The segment covering 1517 to 1538 has biased composition (basic and acidic residues); the sequence is KGAESVTERDTEVGHQAHEHTE. Residues S1548 and S1631 are each glycosylated (O-linked (Xyl...) (chondroitin sulfate) serine). N1663 carries N-linked (GlcNAc...) asparagine glycosylation. 2 disordered regions span residues 1717-1737 and 1759-1789; these read STTV…TAST and PNVA…MTDS. Positions 1720–1729 are enriched in basic and acidic residues; it reads VEEKKRKEEE. The span at 1760–1781 shows a compositional bias: polar residues; it reads NVATSSDSGTRKSFMSLTTPTQ. Residue N1898 is glycosylated (N-linked (GlcNAc...) asparagine). O-linked (Xyl...) (chondroitin sulfate) serine glycans are attached at residues S1935 and S1959. 3 disordered regions span residues 1962-1994, 2107-2134, and 2168-2188; these read AAFR…STMV, RQEI…NSPA, and KEMK…PDAN. Over residues 1969 to 1978 the composition is skewed to low complexity; the sequence is TSPSTVPTSV. Residues 2111-2120 are compositionally biased toward acidic residues; the sequence is ESETTSEEQI. S2116 is subject to Phosphoserine; by FAM20C. N2179 is a glycosylation site (N-linked (GlcNAc...) asparagine). O-linked (Xyl...) (chondroitin sulfate) serine glycosylation is found at S2247 and S2254. N-linked (GlcNAc...) asparagine glycosylation is found at N2272, N2280, N2360, N2385, and N2392. Disordered regions lie at residues 2371-2396, 2445-2473, 2493-2518, and 2598-2617; these read TSRP…ETTT, SATT…EVPS, SEQN…STDG, and DTEV…DDST. Polar residues-rich tracts occupy residues 2445-2461 and 2496-2513; these read SATT…TFVS and NKSS…VSYE. N2496 carries N-linked (GlcNAc...) asparagine glycosylation. The residue at position 2608 (S2608) is a Phosphoserine. Residue T2617 is modified to Phosphothreonine. Residue N2628 is glycosylated (N-linked (GlcNAc...) asparagine). O-linked (Xyl...) (chondroitin sulfate) serine glycosylation is found at S2722, S2723, and S2767. Disordered stretches follow at residues 2834-2856 and 2881-2905; these read GSEA…DVGS and EEYL…EDDG. The span at 2896–2905 shows a compositional bias: basic and acidic residues; that stretch reads TKLEPSEDDG. N2934 is a glycosylation site (N-linked (GlcNAc...) asparagine). Residue S2941 is glycosylated (O-linked (Xyl...) (chondroitin sulfate) serine). N-linked (GlcNAc...) asparagine glycosylation is present at N3067. Residues 3089–3125 form the EGF-like 1 domain; sequence GPDRCKMNPCLNGGTCYPTETSYVCTCVPGYSGDQCE. Intrachain disulfides connect C3093-C3104, C3098-C3113, C3115-C3124, C3131-C3142, C3136-C3151, C3153-C3162, C3169-C3180, C3197-C3289, C3265-C3281, C3296-C3339, and C3325-C3352. In terms of domain architecture, EGF-like 2; calcium-binding spans 3127 to 3163; the sequence is DFDECHSNPCRNGATCVDGFNTFRCLCLPSYVGALCE. The C-type lectin domain occupies 3176-3290; sequence FQGQCYKYFA…CNYHLTYTCK (115 aa). The Sushi domain maps to 3294–3354; sequence VACGQPPVVE…WAIPKITCMN (61 aa). 2 N-linked (GlcNAc...) asparagine glycosylation sites follow: N3369 and N3379. Residues 3371–3380 show a composition bias toward polar residues; the sequence is SSAKDNSINT. The segment at 3371-3396 is disordered; the sequence is SSAKDNSINTSKHDHRWSRRWQESRR.

The protein belongs to the aggrecan/versican proteoglycan family. In terms of assembly, interacts with FBLN1. In terms of processing, phosphorylated by FAM20C in the extracellular medium. Proteolytically cleaved by ADAMTS5 and ADAMTS15 in the pericellular matrix surrounding myoblasts, facilitating myoblast contact and fusion which is required for skeletal muscle development and regeneration. As to expression, detected in placenta (at protein level). Detected in cerebrospinal fluid, fibroblasts and urine (at protein level). Expressed in the retina (at protein level). Cerebral white matter and plasma. Isoform V0: Expressed in normal brain, gliomas, medulloblastomas, schwannomas, neurofibromas, and meningiomas. Isoform V1: Expressed in normal brain, gliomas, medulloblastomas, schwannomas, neurofibromas, and meningiomas. Isoform V2: Restricted to normal brain and gliomas. Isoform V3: Found in all these tissues except medulloblastomas.

The protein resides in the secreted. Its subcellular location is the extracellular space. The protein localises to the extracellular matrix. It is found in the cell projection. It localises to the cilium. The protein resides in the photoreceptor outer segment. Its subcellular location is the interphotoreceptor matrix. May play a role in intercellular signaling and in connecting cells with the extracellular matrix. May take part in the regulation of cell motility, growth and differentiation. Binds hyaluronic acid. The sequence is that of Versican core protein (VCAN) from Homo sapiens (Human).